Consider the following 464-residue polypeptide: MASKSTSTAVWGQLRHLAQQQTRCYSATADSIPASKKKYVPTKGVYPKGFRVSGTIVGVKPGNTTKPDLAFVTSDTPCAAAAVFTKNRFQAAPVTFSRDLLKKKGNSGVNGVIINSGCANAVTGKGGLEDAESMAREADRCLGGDGTIVMSTGVIGQRLPIKRILDNVPAAHSRLGSSHDHWLSCATAICTTDTFPKLMSRSFTLPSSPSVEYRIAGMTKGAGMIHPNMATLLGVIATDAPIAPAVLPSLLKNAVDRSFNSITIDGDTSTNDTVALLANGAAGGKEIASESSPDFAAFRDVLNVFSEDLAKLIVRDGEGATKFVTIRVVESDSEETAKKVASTIARSPLVKTALYGKDANWGRILCATGYALISEPGSAAVAEVSDKIVPEKTNVSFVPTDGTAELKLLVDGEPEQVDEVRAAEILKAEDLEILVRLGTGKAEGTYWTCDFSHEYVTINGDYRT.

Substrate-binding residues include threonine 191, lysine 220, threonine 231, glutamate 318, asparagine 459, and threonine 464. Threonine 231 functions as the Nucleophile in the catalytic mechanism.

The protein belongs to the ArgJ family. In terms of assembly, heterodimer of an alpha and a beta chain. Post-translationally, the alpha and beta chains are autoproteolytically processed from a single precursor protein within the mitochondrion.

It is found in the mitochondrion matrix. It catalyses the reaction N(2)-acetyl-L-ornithine + L-glutamate = N-acetyl-L-glutamate + L-ornithine. It carries out the reaction L-glutamate + acetyl-CoA = N-acetyl-L-glutamate + CoA + H(+). The protein operates within amino-acid biosynthesis; L-arginine biosynthesis; L-ornithine and N-acetyl-L-glutamate from L-glutamate and N(2)-acetyl-L-ornithine (cyclic): step 1/1. Its pathway is amino-acid biosynthesis; L-arginine biosynthesis; N(2)-acetyl-L-ornithine from L-glutamate: step 1/4. Its function is as follows. Catalyzes two activities which are involved in the cyclic version of arginine biosynthesis: the synthesis of acetylglutamate from glutamate and acetyl-CoA, and of ornithine by transacetylation between acetylornithine and glutamate. This chain is Arginine biosynthesis bifunctional protein ArgJ, mitochondrial, found in Pyricularia oryzae (strain 70-15 / ATCC MYA-4617 / FGSC 8958) (Rice blast fungus).